Reading from the N-terminus, the 280-residue chain is 2-dehydro-3-deoxyphosphooctonate aldolase (280 aa).

It belongs to the KdsA family.

The protein resides in the cytoplasm. It carries out the reaction D-arabinose 5-phosphate + phosphoenolpyruvate + H2O = 3-deoxy-alpha-D-manno-2-octulosonate-8-phosphate + phosphate. It participates in carbohydrate biosynthesis; 3-deoxy-D-manno-octulosonate biosynthesis; 3-deoxy-D-manno-octulosonate from D-ribulose 5-phosphate: step 2/3. Its pathway is bacterial outer membrane biogenesis; lipopolysaccharide biosynthesis. The sequence is that of 2-dehydro-3-deoxyphosphooctonate aldolase from Thioalkalivibrio sulfidiphilus (strain HL-EbGR7).